The primary structure comprises 79 residues: MORN repeat-containing protein 2 (79 aa).

MORN repeat units lie at residues 15–36 (YEGQFKDNMFHGLGTYTFPNGA) and 38–55 (YTGNFNENRVEGEGEYTD).

It localises to the cytoplasmic vesicle. The protein localises to the secretory vesicle. It is found in the acrosome. Its subcellular location is the nucleus. Might have a role in spermatogenesis. The polypeptide is MORN repeat-containing protein 2 (Homo sapiens (Human)).